An 830-amino-acid chain; its full sequence is Venom phosphodiesterase (830 aa).

SMB domains lie at 7–50 (PLES…VLPT) and 51–95 (QSWS…RETS). Disulfide bonds link Cys11–Cys15, Cys11–Cys28, Cys15–Cys46, Cys26–Cys28, Cys26–Cys39, Cys32–Cys38, Cys39–Cys46, Cys55–Cys60, Cys55–Cys72, Cys60–Cys90, Cys70–Cys72, Cys70–Cys83, Cys76–Cys82, Cys83–Cys90, Cys101–Cys147, and Cys109–Cys321. N-linked (GlcNAc...) asparagine glycosylation occurs at Asn16. The short motif at 35 to 37 (RKA) is the Cell attachment site element. A divalent metal cation contacts are provided by Asp124 and Thr162. The active-site AMP-threonine intermediate is Thr162. Asn193, Asn236, and Asn247 each carry an N-linked (GlcNAc...) asparagine glycan. Residue Lys248 coordinates AMP. Asp282, His286, Asp329, and His330 together coordinate a divalent metal cation. AMP is bound at residue His286. Disulfide bonds link Cys337/Cys434, Cys385/Cys772, Cys518/Cys575, Cys531/Cys632, Cys533/Cys617, and Cys740/Cys750. His439 provides a ligand contact to a divalent metal cation. Residue Asn489 is glycosylated (N-linked (GlcNAc...) asparagine). Residues Asn723 and Asn742 are each glycosylated (N-linked (GlcNAc...) asparagine).

The protein belongs to the nucleotide pyrophosphatase/phosphodiesterase family. Monomer cleaved in two subunits; disulfide-linked. Is synthesized as a single-chain protein and is subsequently cleaved to form a two-subunit protein held together with disulfide bonds. Requires a divalent metal cation as cofactor. Expressed by venom gland.

It is found in the secreted. The catalysed reaction is ADP + H2O = AMP + phosphate + H(+). Hydrolyzes ADP with high activity. Shows weak or no activity on 5'-AMP, 5'-GMP, 3'-AMP, ATP, cAMP, and cGMP. Is devoid of monophosphatase and proteinase activities. Dose-dependently inhibits platelet aggregation induced by ADP and collagen. The chain is Venom phosphodiesterase from Naja atra (Chinese cobra).